We begin with the raw amino-acid sequence, 414 residues long: Seminal vesicle secretory protein 2 (414 aa).

Residues 1–22 (MKSSVFILSLFLLLERQAAVVG) form the signal peptide. At Gln23 the chain carries Pyrrolidone carboxylic acid. A run of 13 repeats spans residues 108–120 (ESQIKSFRQVKSS), 127–139 (GSQLKSFGQVKSS), 140–152 (ESQLKSFGQVKAS), 153–165 (GSQLKSFGQVKAS), 166–178 (GSQLKSYGQMKSS), 179–191 (GSQVKSFGQMKSS), 192–204 (GSQVKSFGQMKAS), 205–217 (ESQIKSFGQRKSQ), 224–236 (YGQMKSYGQTKSL), 237–249 (ESQAKSFGQVKSQ), 257–269 (YGQRKSYGEETQL), 275–287 (DAQLKSYGQQKSQ), and 299–311 (SAQLKSFGQQKSL). Residues 108-311 (ESQIKSFRQV…LKSFGQQKSL (204 aa)) form a 13 X 13 AA tandem repeats region. 3 disordered regions span residues 170–228 (KSYG…GQMK), 240–294 (AKSF…SFSQ), and 306–369 (GQQK…FGQE). Polar residues predominate over residues 240–259 (AKSFGQVKSQSGQMKSSYGQ). The segment covering 277–294 (QLKSYGQQKSQKQSSFSQ) has biased composition (low complexity). 2 stretches are compositionally biased toward polar residues: residues 306-321 (GQQKSLKGFSQQTQQK) and 342-351 (SVQQKSTQQM). Low complexity predominate over residues 358–369 (SQFGQQRQFGQE).

The repeating unit appears to be involved in the formation of the copulatory plug via a transglutaminase reaction cross-linking glutamine and lysine residues.

Functionally, the rat seminal vesicle contains six major androgen-dependent secretory proteins referred to as SVS I-VI. The SVS I-III proteins appear to be components of the rat copulatory plug, with the SVS II protein being the major component. The polypeptide is Seminal vesicle secretory protein 2 (Svs2) (Rattus norvegicus (Rat)).